The following is a 104-amino-acid chain: Pole-localizer protein TmaR (104 aa).

Coiled coils occupy residues 7 to 34 (IVNQ…NRKR) and 76 to 96 (SAEI…LTEE).

The protein belongs to the pole-localizer TmaR family.

The protein resides in the cytoplasm. Pole-localizer protein involved in the regulation of several cellular processes. The sequence is that of Pole-localizer protein TmaR from Vibrio atlanticus (strain LGP32) (Vibrio splendidus (strain Mel32)).